A 478-amino-acid chain; its full sequence is Protein nucleotidyltransferase YdiU (478 aa).

Residues glycine 84, glycine 86, arginine 87, lysine 107, aspartate 119, glycine 120, arginine 170, and arginine 177 each contribute to the ATP site. The active-site Proton acceptor is the aspartate 246. 2 residues coordinate Mg(2+): asparagine 247 and aspartate 256. Aspartate 256 serves as a coordination point for ATP.

Belongs to the SELO family. It depends on Mg(2+) as a cofactor. The cofactor is Mn(2+).

The catalysed reaction is L-seryl-[protein] + ATP = 3-O-(5'-adenylyl)-L-seryl-[protein] + diphosphate. It catalyses the reaction L-threonyl-[protein] + ATP = 3-O-(5'-adenylyl)-L-threonyl-[protein] + diphosphate. The enzyme catalyses L-tyrosyl-[protein] + ATP = O-(5'-adenylyl)-L-tyrosyl-[protein] + diphosphate. It carries out the reaction L-histidyl-[protein] + UTP = N(tele)-(5'-uridylyl)-L-histidyl-[protein] + diphosphate. The catalysed reaction is L-seryl-[protein] + UTP = O-(5'-uridylyl)-L-seryl-[protein] + diphosphate. It catalyses the reaction L-tyrosyl-[protein] + UTP = O-(5'-uridylyl)-L-tyrosyl-[protein] + diphosphate. Nucleotidyltransferase involved in the post-translational modification of proteins. It can catalyze the addition of adenosine monophosphate (AMP) or uridine monophosphate (UMP) to a protein, resulting in modifications known as AMPylation and UMPylation. This Shigella sonnei (strain Ss046) protein is Protein nucleotidyltransferase YdiU.